Consider the following 336-residue polypeptide: Cytosolic Fe-S cluster assembly factor NBP35 (336 aa).

The interval 1-20 (MIATQRPFPIPSPVPLAPSS) is disordered. [4Fe-4S] cluster contacts are provided by cysteine 35, cysteine 49, cysteine 52, and cysteine 58. 88–95 (GKGGVGKS) contacts ATP. [4Fe-4S] cluster-binding residues include cysteine 261 and cysteine 264.

Belongs to the Mrp/NBP35 ATP-binding proteins family. NUBP1/NBP35 subfamily. Heterotetramer of 2 NBP35 and 2 CFD1 chains. The cofactor is [4Fe-4S] cluster.

It is found in the cytoplasm. Functionally, component of the cytosolic iron-sulfur (Fe/S) protein assembly (CIA) machinery. Required for maturation of extramitochondrial Fe-S proteins. The NBP35-CFD1 heterotetramer forms a Fe-S scaffold complex, mediating the de novo assembly of an Fe-S cluster and its transfer to target apoproteins. The chain is Cytosolic Fe-S cluster assembly factor NBP35 from Cryptococcus neoformans var. neoformans serotype D (strain B-3501A) (Filobasidiella neoformans).